The primary structure comprises 424 residues: DUF21 domain-containing protein At4g33700 (424 aa).

Residues 1-11 are Extracellular-facing; that stretch reads MAVEYVCCSPN. The CNNM transmembrane domain occupies 8–191; sequence CSPNFFIHIA…GKGGELTHDE (184 aa). The chain crosses the membrane as a helical span at residues 12–32; that stretch reads FFIHIAVIVFLVLFAGLMSGL. The Cytoplasmic segment spans residues 33 to 70; it reads TLGLMSLSLVDLEVLAKSGTPEHRKYAAKILPVVKNQH. The chain crosses the membrane as a helical span at residues 71 to 91; the sequence is LLLVTLLICNAAAMETLPIFL. The Extracellular portion of the chain corresponds to 92 to 94; that stretch reads DGL. The helical transmembrane segment at 95 to 115 threads the bilayer; sequence VTAWGAILISVTLILLFGEII. Topologically, residues 116 to 136 are cytoplasmic; the sequence is PQSICSRYGLAIGATVAPFVR. Residues 137 to 157 form a helical membrane-spanning segment; sequence VLVFICLPVAWPISKLLDFLL. Residues 158–424 lie on the Extracellular side of the membrane; that stretch reads GHRRAALFRR…DETDHHFEDS (267 aa). In terms of domain architecture, CBS 1 spans 210–271; that stretch reads MTPISDIFVI…TINPDEEIPV (62 aa). N-linked (GlcNAc...) asparagine glycans are attached at residues asparagine 273 and asparagine 319. 2 consecutive CBS domains span residues 275–331 and 355–416; these read TIRR…DVDS and PNRA…IFDE. 2 disordered regions span residues 321–340 and 355–374; these read SVKE…PQER and PNRA…SKDN. Serine 331 is modified (phosphoserine).

It localises to the membrane. This Arabidopsis thaliana (Mouse-ear cress) protein is DUF21 domain-containing protein At4g33700 (CBSDUF6).